Consider the following 338-residue polypeptide: MVDFKSIIAKVATGATLTRDEATDAFDAMMSGDATPSQMGALLMGLRVRGETVDEITGAVTTMRAKMLPVTAPADAVDIVGTGGDGSGSVNVSTCASFVVAGCGVTVAKHGNRALSSKSGAADVLAALGVKIDITPEQVGRCVNEAGIGFMFAPTHHPAMKNVGPTRVELATRTIFNLLGPLSNPAGVKRQMIGVFSRQWVQPLAQVLKNLGSEAVWVVHGSDGLDEITLSGTTAVAELKNGEITSFEISPEDAGLPRAPADALKGGDAQANAVALRAVLEGMPGPYRDVALLNAAATLVVAGKARDLKEGVALGTQSIDSGAAEARLKKLIAVSAAA.

5-phospho-alpha-D-ribose 1-diphosphate-binding positions include Gly81, 84–85 (GD), Ser89, 91–94 (NVST), 109–117 (KHGNRALSS), and Ala121. Gly81 serves as a coordination point for anthranilate. Ser93 contacts Mg(2+). Asn112 is an anthranilate binding site. Arg167 contributes to the anthranilate binding site. Mg(2+) is bound by residues Asp226 and Glu227.

This sequence belongs to the anthranilate phosphoribosyltransferase family. In terms of assembly, homodimer. Mg(2+) serves as cofactor.

It catalyses the reaction N-(5-phospho-beta-D-ribosyl)anthranilate + diphosphate = 5-phospho-alpha-D-ribose 1-diphosphate + anthranilate. The protein operates within amino-acid biosynthesis; L-tryptophan biosynthesis; L-tryptophan from chorismate: step 2/5. Its function is as follows. Catalyzes the transfer of the phosphoribosyl group of 5-phosphorylribose-1-pyrophosphate (PRPP) to anthranilate to yield N-(5'-phosphoribosyl)-anthranilate (PRA). This is Anthranilate phosphoribosyltransferase from Rhodopseudomonas palustris (strain ATCC BAA-98 / CGA009).